Consider the following 571-residue polypeptide: Proline--tRNA ligase (571 aa).

It belongs to the class-II aminoacyl-tRNA synthetase family. ProS type 1 subfamily. In terms of assembly, homodimer.

The protein localises to the cytoplasm. It carries out the reaction tRNA(Pro) + L-proline + ATP = L-prolyl-tRNA(Pro) + AMP + diphosphate. Functionally, catalyzes the attachment of proline to tRNA(Pro) in a two-step reaction: proline is first activated by ATP to form Pro-AMP and then transferred to the acceptor end of tRNA(Pro). As ProRS can inadvertently accommodate and process non-cognate amino acids such as alanine and cysteine, to avoid such errors it has two additional distinct editing activities against alanine. One activity is designated as 'pretransfer' editing and involves the tRNA(Pro)-independent hydrolysis of activated Ala-AMP. The other activity is designated 'posttransfer' editing and involves deacylation of mischarged Ala-tRNA(Pro). The misacylated Cys-tRNA(Pro) is not edited by ProRS. This chain is Proline--tRNA ligase, found in Pseudomonas putida (strain GB-1).